The following is a 220-amino-acid chain: Peptide methionine sulfoxide reductase MsrA (220 aa).

The active site involves Cys54.

Belongs to the MsrA Met sulfoxide reductase family.

The enzyme catalyses L-methionyl-[protein] + [thioredoxin]-disulfide + H2O = L-methionyl-(S)-S-oxide-[protein] + [thioredoxin]-dithiol. It catalyses the reaction [thioredoxin]-disulfide + L-methionine + H2O = L-methionine (S)-S-oxide + [thioredoxin]-dithiol. In terms of biological role, has an important function as a repair enzyme for proteins that have been inactivated by oxidation. Catalyzes the reversible oxidation-reduction of methionine sulfoxide in proteins to methionine. The sequence is that of Peptide methionine sulfoxide reductase MsrA from Salinispora arenicola (strain CNS-205).